Here is a 254-residue protein sequence, read N- to C-terminus: U3 small nucleolar RNA-associated protein NOL7 (254 aa).

The tract at residues 1 to 90 (MVQLRPRLSR…ASARRDKTLL (90 aa)) is disordered. Acidic residues-rich tracts occupy residues 18 to 31 (MVDE…EEEA) and 48 to 61 (PLDE…EAPE). Over residues 71 to 90 (EAREEELRVRASARRDKTLL) the composition is skewed to basic and acidic residues. Lysine 127 participates in a covalent cross-link: Glycyl lysine isopeptide (Lys-Gly) (interchain with G-Cter in SUMO2). Serine 129 carries the post-translational modification Phosphoserine. Residue lysine 157 forms a Glycyl lysine isopeptide (Lys-Gly) (interchain with G-Cter in SUMO2) linkage. The disordered stretch occupies residues 235–254 (NAKRFKKRWMAKKMKKKTYK).

This sequence belongs to the UTP16 family. As to quaternary structure, part of the small subunit (SSU) processome, composed of more than 70 proteins and the RNA chaperone small nucleolar RNA (snoRNA) U3.

It is found in the nucleus. The protein localises to the nucleolus. Functionally, functions as part of the small subunit (SSU) processome, first precursor of the small eukaryotic ribosomal subunit that coordinates the first two steps of ribosome biogenesis in transcription of the primary transcript pre-RNA and pre-18S processing. During the assembly of the SSU processome in the nucleolus, many ribosome biogenesis factors, an RNA chaperone and ribosomal proteins associate with the nascent pre-rRNA and work in concert to generate RNA folding, modifications, rearrangements and cleavage as well as targeted degradation of pre-ribosomal RNA by the RNA exosome. This subunit is required for processing of the 5'-external transcribed spacer sequence (5'ETS) of the primary transcript pre-rRNA to yield the 18S rRNA. Also plays a role in maintaining early pre-rRNA levels, either by assisting in its transcription or stability. This chain is U3 small nucleolar RNA-associated protein NOL7 (Nol7), found in Mus musculus (Mouse).